Consider the following 121-residue polypeptide: Small ribosomal subunit protein uS13 (121 aa).

A disordered region spans residues 91–121 (HRRGLPVRGQKTKNNARTRKGPVKTVANKKK).

This sequence belongs to the universal ribosomal protein uS13 family. As to quaternary structure, part of the 30S ribosomal subunit. Forms a loose heterodimer with protein S19. Forms two bridges to the 50S subunit in the 70S ribosome.

Located at the top of the head of the 30S subunit, it contacts several helices of the 16S rRNA. In the 70S ribosome it contacts the 23S rRNA (bridge B1a) and protein L5 of the 50S subunit (bridge B1b), connecting the 2 subunits; these bridges are implicated in subunit movement. Contacts the tRNAs in the A and P-sites. This chain is Small ribosomal subunit protein uS13, found in Staphylococcus saprophyticus subsp. saprophyticus (strain ATCC 15305 / DSM 20229 / NCIMB 8711 / NCTC 7292 / S-41).